Consider the following 87-residue polypeptide: Phospholemman (87 aa).

A signal peptide spans 1 to 20 (MASLSHILVLWVGILTVVNA). The Extracellular segment spans residues 21–35 (EAPQEHDPFTYDYQS). Residues 36–56 (LRIGGLIIAGILFILGILIVL) form a helical membrane-spanning segment. Over 57-87 (SRRCRCKFNQQQSLGKMRSPHLAAQFSSESC) the chain is Cytoplasmic. Cys60 carries S-palmitoyl cysteine lipidation. S-glutathionyl cysteine; alternate is present on Cys62. A lipid anchor (S-palmitoyl cysteine; alternate) is attached at Cys62. Residue Ser75 is modified to Phosphoserine; by PKA and PKC. Position 83 is a phosphoserine; by PKA (Ser83).

Belongs to the FXYD family. In terms of assembly, homotetramer. Monomer. Regulatory subunit of the sodium/potassium-transporting ATPase (NKA) which is composed of a catalytic alpha subunit, a non-catalytic beta subunit and an additional regulatory subunit. The monomeric form associates with NKA while the oligomeric form does not. Interacts with the catalytic alpha-1 subunit ATP1A1. Also interacts with the catalytic alpha-2 and alpha-3 subunits ATP1A2 and ATP1A3. Very little interaction with ATP1A1, ATP1A2 or ATP1A3 when phosphorylated at Ser-83. Interacts with the non-catalytic beta-1 subunit ATP1B1. Oxidative stress decreases interaction with ATP1A1 but increases interaction with ATP1B1. In terms of processing, major plasma membrane substrate for cAMP-dependent protein kinase (PKA) and protein kinase C (PKC) in several different tissues. Phosphorylated in response to insulin and adrenergic stimulation. Phosphorylation at Ser-83 stimulates sodium/potassium-transporting ATPase activity while the unphosphorylated form inhibits sodium/potassium-transporting ATPase activity. Phosphorylation increases tetramerization, decreases binding to ATP1A1 and reduces inhibition of ATP1A1 activity. Phosphorylation at Ser-75 leads to greatly reduced interaction with ATP1A1, ATP1A2 and ATP1A3. May be phosphorylated by DMPK. Post-translationally, palmitoylation increases half-life and stability and is enhanced upon phosphorylation at Ser-83 by PKA.

The protein resides in the cell membrane. Its subcellular location is the sarcolemma. It is found in the apical cell membrane. The protein localises to the membrane. It localises to the caveola. The protein resides in the T-tubule. Associates with and regulates the activity of the sodium/potassium-transporting ATPase (NKA) which transports Na(+) out of the cell and K(+) into the cell. Inhibits NKA activity in its unphosphorylated state and stimulates activity when phosphorylated. Reduces glutathionylation of the NKA beta-1 subunit ATP1B1, thus reversing glutathionylation-mediated inhibition of ATP1B1. Contributes to female sexual development by maintaining the excitability of neurons which secrete gonadotropin-releasing hormone. This is Phospholemman from Sus scrofa (Pig).